A 281-amino-acid polypeptide reads, in one-letter code: Phosphonates import ATP-binding protein PhnC (281 aa).

The ABC transporter domain occupies 5-253 (IEVCGLTKSF…MLRDLYGTEA (249 aa)). ATP is bound at residue 38–45 (GASGSGKS).

The protein belongs to the ABC transporter superfamily. Phosphonates importer (TC 3.A.1.9.1) family. In terms of assembly, the complex is composed of two ATP-binding proteins (PhnC), two transmembrane proteins (PhnE) and a solute-binding protein (PhnD).

It localises to the cell inner membrane. The enzyme catalyses phosphonate(out) + ATP + H2O = phosphonate(in) + ADP + phosphate + H(+). Functionally, part of the ABC transporter complex PhnCDE involved in phosphonates import. Responsible for energy coupling to the transport system. This chain is Phosphonates import ATP-binding protein PhnC, found in Cupriavidus pinatubonensis (strain JMP 134 / LMG 1197) (Cupriavidus necator (strain JMP 134)).